The sequence spans 215 residues: UPF0502 protein YceH (215 aa).

This sequence belongs to the UPF0502 family.

This Salmonella arizonae (strain ATCC BAA-731 / CDC346-86 / RSK2980) protein is UPF0502 protein YceH.